The chain runs to 494 residues: DnaJ homolog subfamily C member 7 (494 aa).

Alanine 2 bears the N-acetylalanine mark. TPR repeat units lie at residues 28–61 (AESF…CPNN), 62–95 (ASYY…DDSF), 96–129 (VRGH…DHKN), 142–175 (VMEY…APAC), 210–243 (ADAL…APDH), 256–289 (LKAK…DPNN), 294–327 (AKLY…DDTY), and 328–361 (IKAY…EKTK). One can recognise a J domain in the interval 381–451 (DYYKILGVDK…KKKTRYDSGQ (71 aa)). Serine 393 bears the Phosphoserine mark.

Associates with complexes containing chaperones HSP70 and HSP90. Interacts with the GAP domain of NF1. Interacts with HSP90AA1. Interacts with HSPA1A/B; the interaction is enhanced by ATP. Interacts with HSP90AB1. Interacts with PGR. Interacts with RAD9A; the interaction is interrupted by UV and heat shock treatments. Interacts with HUS1 and RAD1. Interacts with NR1I3; this complex may also include HSP90 Interacts with HSPA8. In terms of tissue distribution, widely expressed with high levels in liver, skeletal muscle, kidney and testis.

The protein resides in the cytoplasm. Its subcellular location is the nucleus. It is found in the cytoskeleton. Functionally, acts as a co-chaperone regulating the molecular chaperones HSP70 and HSP90 in folding of steroid receptors, such as the glucocorticoid receptor and the progesterone receptor. Proposed to act as a recycling chaperone by facilitating the return of chaperone substrates to early stages of chaperoning if further folding is required. In vitro, induces ATP-independent dissociation of HSP90 but not of HSP70 from the chaperone-substrate complexes. Recruits NR1I3 to the cytoplasm. The sequence is that of DnaJ homolog subfamily C member 7 (Dnajc7) from Mus musculus (Mouse).